We begin with the raw amino-acid sequence, 857 residues long: DNA mismatch repair protein MutS (857 aa).

603-610 (GPNMAGKS) serves as a coordination point for ATP.

Belongs to the DNA mismatch repair MutS family.

Functionally, this protein is involved in the repair of mismatches in DNA. It is possible that it carries out the mismatch recognition step. This protein has a weak ATPase activity. The chain is DNA mismatch repair protein MutS from Methanothrix thermoacetophila (strain DSM 6194 / JCM 14653 / NBRC 101360 / PT) (Methanosaeta thermophila).